The sequence spans 506 residues: Proline--tRNA ligase (506 aa).

It belongs to the class-II aminoacyl-tRNA synthetase family. ProS type 3 subfamily. In terms of assembly, homodimer.

The protein resides in the cytoplasm. The enzyme catalyses tRNA(Pro) + L-proline + ATP = L-prolyl-tRNA(Pro) + AMP + diphosphate. Its function is as follows. Catalyzes the attachment of proline to tRNA(Pro) in a two-step reaction: proline is first activated by ATP to form Pro-AMP and then transferred to the acceptor end of tRNA(Pro). The protein is Proline--tRNA ligase of Rhodopirellula baltica (strain DSM 10527 / NCIMB 13988 / SH1).